Reading from the N-terminus, the 402-residue chain is Protein FixF (402 aa).

This is Protein FixF (fixF) from Sinorhizobium fredii (strain NBRC 101917 / NGR234).